The chain runs to 484 residues: MQGFISQVLGPVVDVEFKDYLPQINEAIVVNYELEGKECKLVLEVAAHLGDNKVRTIAMDMTDGLVRGLTAVATGNPISVPVGEKVLGRIFNVTGDLIDEGEEINFDKHWSIHRDPPPFEEQSTKSEIFETGIKVVDLLAPYAKGGKVGLFGGAGVGKTVIIMELIHNVAFKHSGYSVFAGVGERTREGNDLYNEMKESNVLDKVALCYGQMNEPPGARNRIALTGLTMAEYFRDEMGLDVLMFIDNIFRFSQSGSEMSALLGRIPSAVGYQPTLASEMGKFQERITSTKKGSITSVQAVYVPADDLTDPAPATVFAHLDATTVLNRSIAEKGIYPAVDPLDSTSRMLDPQIIGEEHYKVARGVQSVLQKYKDLQDIIAILGMDELSEEDKLIVERARKIEKFLSQPFFVAEVFTGSPGKYISLEDTIAGFKGILEGKYDDLPENAFYMVGNIDEAIAKAETLKEVSRKDVCLDNCKVDKAKKG.

Position 152–159 (152–159 (GGAGVGKT)) interacts with ATP.

This sequence belongs to the ATPase alpha/beta chains family. In terms of assembly, F-type ATPases have 2 components, CF(1) - the catalytic core - and CF(0) - the membrane proton channel. CF(1) has five subunits: alpha(3), beta(3), gamma(1), delta(1), epsilon(1). CF(0) has three main subunits: a(1), b(2) and c(9-12). The alpha and beta chains form an alternating ring which encloses part of the gamma chain. CF(1) is attached to CF(0) by a central stalk formed by the gamma and epsilon chains, while a peripheral stalk is formed by the delta and b chains.

The protein resides in the cell inner membrane. It catalyses the reaction ATP + H2O + 4 H(+)(in) = ADP + phosphate + 5 H(+)(out). Its function is as follows. Produces ATP from ADP in the presence of a proton gradient across the membrane. The catalytic sites are hosted primarily by the beta subunits. This Campylobacter lari (strain RM2100 / D67 / ATCC BAA-1060) protein is ATP synthase subunit beta.